A 111-amino-acid polypeptide reads, in one-letter code: Sulditoxin subunit B (111 aa).

The N-terminal stretch at 1 to 19 is a signal peptide; sequence MKTLLLALAVVVLVCLGSA. The propeptide occupies 20 to 34; sequence NELGLGRQQIDRGRR. Glutamine 35 is modified (pyrrolidone carboxylic acid). 5 disulfide bridges follow: cysteine 44-cysteine 68, cysteine 47-cysteine 55, cysteine 61-cysteine 87, cysteine 91-cysteine 102, and cysteine 103-cysteine 108.

The protein belongs to the three-finger toxin family. Ancestral subfamily. Boigatoxin sub-subfamily. Heterodimer of sulditoxin subunits A and B; probably disulfide-linked. As to expression, expressed by the venom gland.

The protein localises to the secreted. Its function is as follows. Reptile-specific neurotoxin (tested on geckos). Inhibits nicotinic acetylcholine receptor (nAChR). Not toxic to mammals (tested on mice). This is Sulditoxin subunit B from Spilotes sulphureus (Amazon puffing snake).